The chain runs to 476 residues: Protein DETOXIFICATION 3 (476 aa).

Transmembrane regions (helical) follow at residues Ala-35–Val-55, Gly-66–Ala-86, Ile-117–Leu-137, Val-146–Pro-166, Leu-185–Gly-205, Gly-208–Val-228, Ala-260–Leu-280, Val-289–Ala-309, Val-331–Thr-351, Val-370–Leu-390, Ile-402–Leu-422, and Leu-433–Ala-453.

This sequence belongs to the multi antimicrobial extrusion (MATE) (TC 2.A.66.1) family.

The protein localises to the membrane. This chain is Protein DETOXIFICATION 3, found in Arabidopsis thaliana (Mouse-ear cress).